Here is a 1197-residue protein sequence, read N- to C-terminus: DNA-directed RNA polymerase subunit beta (1197 aa).

This sequence belongs to the RNA polymerase beta chain family. In terms of assembly, the RNAP catalytic core consists of 2 alpha, 1 beta, 1 beta' and 1 omega subunit. When a sigma factor is associated with the core the holoenzyme is formed, which can initiate transcription.

It carries out the reaction RNA(n) + a ribonucleoside 5'-triphosphate = RNA(n+1) + diphosphate. DNA-dependent RNA polymerase catalyzes the transcription of DNA into RNA using the four ribonucleoside triphosphates as substrates. In Streptococcus pyogenes serotype M12 (strain MGAS9429), this protein is DNA-directed RNA polymerase subunit beta.